A 410-amino-acid chain; its full sequence is LL-diaminopimelate aminotransferase (410 aa).

Residues Tyr15 and Gly42 each coordinate substrate. Pyridoxal 5'-phosphate is bound by residues Tyr72, 108 to 109 (AK), Tyr132, Asn188, Tyr219, and 247 to 249 (SFS). Residues Lys109, Tyr132, and Asn188 each contribute to the substrate site. The residue at position 250 (Lys250) is an N6-(pyridoxal phosphate)lysine. Arg258 and Asn293 together coordinate pyridoxal 5'-phosphate. Residues Asn293 and Arg389 each contribute to the substrate site.

Belongs to the class-I pyridoxal-phosphate-dependent aminotransferase family. LL-diaminopimelate aminotransferase subfamily. In terms of assembly, homodimer. Requires pyridoxal 5'-phosphate as cofactor.

The catalysed reaction is (2S,6S)-2,6-diaminopimelate + 2-oxoglutarate = (S)-2,3,4,5-tetrahydrodipicolinate + L-glutamate + H2O + H(+). It participates in amino-acid biosynthesis; L-lysine biosynthesis via DAP pathway; LL-2,6-diaminopimelate from (S)-tetrahydrodipicolinate (aminotransferase route): step 1/1. Functionally, involved in the synthesis of meso-diaminopimelate (m-DAP or DL-DAP), required for both lysine and peptidoglycan biosynthesis. Catalyzes the direct conversion of tetrahydrodipicolinate to LL-diaminopimelate. The polypeptide is LL-diaminopimelate aminotransferase (Bacteroides thetaiotaomicron (strain ATCC 29148 / DSM 2079 / JCM 5827 / CCUG 10774 / NCTC 10582 / VPI-5482 / E50)).